The primary structure comprises 137 residues: MSEEQVNIKKKEKWGIAHIYSSYNNTIIHITDITGAETISRWSGGMVVKADRDEPSPYAAMLAARRAAEEALEKGIVGVHIRVRAPGGSKSKTPGPGAQAAIRALARAGLKIGRVEDVTPIPHDGTRPKGGRRGRRV.

Positions 116-137 (EDVTPIPHDGTRPKGGRRGRRV) are disordered.

It belongs to the universal ribosomal protein uS11 family. As to quaternary structure, part of the 30S ribosomal subunit.

Its function is as follows. Located on the platform of the 30S subunit. The polypeptide is Small ribosomal subunit protein uS11 (Pyrococcus abyssi (strain GE5 / Orsay)).